The primary structure comprises 542 residues: Glutamyl-tRNA(Gln) amidotransferase subunit B, mitochondrial (542 aa).

A mitochondrion-targeting transit peptide spans 1–66 (MRVFRRFYQV…PNSHTSFFDI (66 aa)).

This sequence belongs to the GatB/GatE family. GatB subfamily. Subunit of the heterotrimeric GatFAB amidotransferase (AdT) complex, composed of A, B and F subunits.

The protein localises to the mitochondrion. It catalyses the reaction L-glutamyl-tRNA(Gln) + L-glutamine + ATP + H2O = L-glutaminyl-tRNA(Gln) + L-glutamate + ADP + phosphate + H(+). Allows the formation of correctly charged Gln-tRNA(Gln) through the transamidation of misacylated Glu-tRNA(Gln) in the mitochondria. The reaction takes place in the presence of glutamine and ATP through an activated gamma-phospho-Glu-tRNA(Gln). This is Glutamyl-tRNA(Gln) amidotransferase subunit B, mitochondrial from Zygosaccharomyces rouxii (strain ATCC 2623 / CBS 732 / NBRC 1130 / NCYC 568 / NRRL Y-229).